Here is a 270-residue protein sequence, read N- to C-terminus: Phosphonoacetaldehyde hydrolase (270 aa).

The Nucleophile role is filled by Asp-11. The Mg(2+) site is built by Asp-11 and Ala-13. Lys-53 (schiff-base intermediate with substrate) is an active-site residue. Asp-187 contacts Mg(2+).

This sequence belongs to the HAD-like hydrolase superfamily. PhnX family. As to quaternary structure, homodimer. It depends on Mg(2+) as a cofactor.

The catalysed reaction is phosphonoacetaldehyde + H2O = acetaldehyde + phosphate + H(+). Involved in phosphonate degradation. The protein is Phosphonoacetaldehyde hydrolase of Salmonella gallinarum (strain 287/91 / NCTC 13346).